We begin with the raw amino-acid sequence, 429 residues long: Gamma-glutamyl phosphate reductase (429 aa).

This sequence belongs to the gamma-glutamyl phosphate reductase family.

It localises to the cytoplasm. The catalysed reaction is L-glutamate 5-semialdehyde + phosphate + NADP(+) = L-glutamyl 5-phosphate + NADPH + H(+). It functions in the pathway amino-acid biosynthesis; L-proline biosynthesis; L-glutamate 5-semialdehyde from L-glutamate: step 2/2. In terms of biological role, catalyzes the NADPH-dependent reduction of L-glutamate 5-phosphate into L-glutamate 5-semialdehyde and phosphate. The product spontaneously undergoes cyclization to form 1-pyrroline-5-carboxylate. This chain is Gamma-glutamyl phosphate reductase, found in Bradyrhizobium sp. (strain ORS 278).